A 418-amino-acid polypeptide reads, in one-letter code: Tyrosine--tRNA ligase (418 aa).

The short motif at 42 to 51 (PTSPDLHLGH) is the 'HIGH' region element. The 'KMSKS' region signature appears at 226-230 (KMSKS). Lys-229 contacts ATP. The S4 RNA-binding domain occupies 339-400 (VRLVALLTKS…GKRNFIKVRL (62 aa)).

The protein belongs to the class-I aminoacyl-tRNA synthetase family. TyrS type 2 subfamily. As to quaternary structure, homodimer.

It is found in the cytoplasm. It catalyses the reaction tRNA(Tyr) + L-tyrosine + ATP = L-tyrosyl-tRNA(Tyr) + AMP + diphosphate + H(+). Its function is as follows. Catalyzes the attachment of tyrosine to tRNA(Tyr) in a two-step reaction: tyrosine is first activated by ATP to form Tyr-AMP and then transferred to the acceptor end of tRNA(Tyr). The sequence is that of Tyrosine--tRNA ligase from Xylella fastidiosa (strain Temecula1 / ATCC 700964).